A 305-amino-acid chain; its full sequence is Oligopeptide transport ATP-binding protein OppF (305 aa).

The ABC transporter domain maps to L6–L251. G42 to S49 contacts ATP.

This sequence belongs to the ABC transporter superfamily. As to quaternary structure, the complex is composed of two ATP-binding proteins (OppD and OppF), two transmembrane proteins (OppB and OppC) and a solute-binding protein (OppA).

The protein localises to the cell membrane. The enzyme catalyses a [peptide](out) + ATP + H2O = a [peptide](in) + ADP + phosphate + H(+). Its function is as follows. Part of the ABC transporter complex OppABCDF involved in the uptake of oligopeptides. Probably responsible for energy coupling to the transport system. Required for genetic competence but not for peptide transport or for sporulation. The polypeptide is Oligopeptide transport ATP-binding protein OppF (Bacillus subtilis (strain 168)).